Here is an 836-residue protein sequence, read N- to C-terminus: Protein translocase subunit SecA (836 aa).

Residues Gln-85, 103 to 107 (GEGKT), and Asp-492 contribute to the ATP site. Positions 786-817 (REQVAKETSTNQGGDDTLKKQPIKKEPKIGRN) are disordered. The span at 801–816 (DTLKKQPIKKEPKIGR) shows a compositional bias: basic and acidic residues. Positions 820, 822, 831, and 832 each coordinate Zn(2+).

It belongs to the SecA family. In terms of assembly, monomer and homodimer. Part of the essential Sec protein translocation apparatus which comprises SecA, SecYEG and auxiliary proteins SecDF. Other proteins may also be involved. Zn(2+) serves as cofactor.

It localises to the cell membrane. It is found in the cytoplasm. It carries out the reaction ATP + H2O + cellular proteinSide 1 = ADP + phosphate + cellular proteinSide 2.. Its function is as follows. Part of the Sec protein translocase complex. Interacts with the SecYEG preprotein conducting channel. Has a central role in coupling the hydrolysis of ATP to the transfer of proteins into and across the cell membrane, serving as an ATP-driven molecular motor driving the stepwise translocation of polypeptide chains across the membrane. This chain is Protein translocase subunit SecA, found in Clostridium tetani (strain Massachusetts / E88).